We begin with the raw amino-acid sequence, 702 residues long: Mesothelin-like protein (702 aa).

The N-terminal stretch at 1–35 is a signal peptide; it reads MAAAVTIPGPRIGALQSSGLTLLLSLAAHCSGPQA. Over 36–638 the chain is Extracellular; sequence KVLSPGGLDA…AQASTSGSLW (603 aa). N-linked (GlcNAc...) asparagine glycans are attached at residues asparagine 122, asparagine 307, and asparagine 424. The segment at 588 to 611 is disordered; sequence QLGLDASPTSPTGPAHGTRGPPST. A helical membrane pass occupies residues 639–668; sequence APLGYLPLAMALPCSLLCLLHWGTCILVSV. The Cytoplasmic portion of the chain corresponds to 669–702; sequence DSVASGWLGSQGSGAGKTEVLDSAGRPLGLTGQL.

Belongs to the mesothelin family.

Its subcellular location is the membrane. May play a role in cellular adhesion. This Homo sapiens (Human) protein is Mesothelin-like protein (MSLNL).